A 288-amino-acid polypeptide reads, in one-letter code: Formamidopyrimidine-DNA glycosylase (288 aa).

The active-site Schiff-base intermediate with DNA is the P2. Residue E3 is the Proton donor of the active site. The active-site Proton donor; for beta-elimination activity is K59. DNA is bound by residues H93, R112, and K168. The FPG-type zinc finger occupies 254–288 (NVYGRGGEPCKRCGAPIKRVVVGGRSTHYCATCQR). The active-site Proton donor; for delta-elimination activity is the R278.

Belongs to the FPG family. In terms of assembly, monomer. The cofactor is Zn(2+).

The enzyme catalyses Hydrolysis of DNA containing ring-opened 7-methylguanine residues, releasing 2,6-diamino-4-hydroxy-5-(N-methyl)formamidopyrimidine.. It carries out the reaction 2'-deoxyribonucleotide-(2'-deoxyribose 5'-phosphate)-2'-deoxyribonucleotide-DNA = a 3'-end 2'-deoxyribonucleotide-(2,3-dehydro-2,3-deoxyribose 5'-phosphate)-DNA + a 5'-end 5'-phospho-2'-deoxyribonucleoside-DNA + H(+). In terms of biological role, involved in base excision repair of DNA damaged by oxidation or by mutagenic agents. Acts as a DNA glycosylase that recognizes and removes damaged bases. Has a preference for oxidized purines, such as 7,8-dihydro-8-oxoguanine (8-oxoG). Has AP (apurinic/apyrimidinic) lyase activity and introduces nicks in the DNA strand. Cleaves the DNA backbone by beta-delta elimination to generate a single-strand break at the site of the removed base with both 3'- and 5'-phosphates. This Corynebacterium jeikeium (strain K411) protein is Formamidopyrimidine-DNA glycosylase.